Reading from the N-terminus, the 437-residue chain is Xylose isomerase (437 aa).

Catalysis depends on residues histidine 101 and aspartate 104. Glutamate 232, glutamate 268, histidine 271, aspartate 296, aspartate 307, aspartate 309, and aspartate 339 together coordinate Mg(2+).

It belongs to the xylose isomerase family. As to quaternary structure, homotetramer. It depends on Mg(2+) as a cofactor.

The protein resides in the cytoplasm. It carries out the reaction alpha-D-xylose = alpha-D-xylulofuranose. This Actinobacillus succinogenes (strain ATCC 55618 / DSM 22257 / CCUG 43843 / 130Z) protein is Xylose isomerase.